Reading from the N-terminus, the 277-residue chain is Large ribosomal subunit protein uL2 (277 aa).

Residues 218-277 (PTVRGSVMNPNDHPHGGGEGKAPVGRKAPSTPWGKPALGLKTRNKKAKSDKLIVRRRNEK) are disordered. Residues 264 to 277 (AKSDKLIVRRRNEK) are compositionally biased toward basic and acidic residues.

This sequence belongs to the universal ribosomal protein uL2 family. As to quaternary structure, part of the 50S ribosomal subunit. Forms a bridge to the 30S subunit in the 70S ribosome.

Functionally, one of the primary rRNA binding proteins. Required for association of the 30S and 50S subunits to form the 70S ribosome, for tRNA binding and peptide bond formation. It has been suggested to have peptidyltransferase activity; this is somewhat controversial. Makes several contacts with the 16S rRNA in the 70S ribosome. In Streptococcus pyogenes serotype M4 (strain MGAS10750), this protein is Large ribosomal subunit protein uL2.